Here is a 294-residue protein sequence, read N- to C-terminus: Octopine-binding periplasmic protein (294 aa).

Positions 1-20 (MRLKSIMCAALFVVAGQAAA) are cleaved as a signal peptide. Cys-57 and Cys-64 are joined by a disulfide.

Belongs to the bacterial solute-binding protein 3 family.

It is found in the periplasm. Functionally, component of the octopine active transport system probably consisting of four subunits: Q, M, P and T. The protein is Octopine-binding periplasmic protein (occT) of Rhizobium meliloti (Ensifer meliloti).